A 537-amino-acid chain; its full sequence is Phosphoenolpyruvate carboxykinase (ATP) (537 aa).

The substrate site is built by Arg61, Tyr195, and Lys201. ATP is bound by residues Lys201, His220, and 236-244; that span reads GLSGTGKTT. Residues Lys201 and His220 each contribute to the Mn(2+) site. Asp257 serves as a coordination point for Mn(2+). Position 285 (Glu285) interacts with ATP. The segment covering 312 to 321 has biased composition (basic and acidic residues); sequence DFNDGSKTEN. A disordered region spans residues 312 to 339; that stretch reads DFNDGSKTENTRSAYPLESIPNASPTGR. Arg323 is a substrate binding site. Residues Arg323 and Thr448 each coordinate ATP.

Belongs to the phosphoenolpyruvate carboxykinase (ATP) family. Mn(2+) serves as cofactor.

The protein resides in the cytoplasm. It carries out the reaction oxaloacetate + ATP = phosphoenolpyruvate + ADP + CO2. The protein operates within carbohydrate biosynthesis; gluconeogenesis. In terms of biological role, involved in the gluconeogenesis. Catalyzes the conversion of oxaloacetate (OAA) to phosphoenolpyruvate (PEP) through direct phosphoryl transfer between the nucleoside triphosphate and OAA. This Rhodopseudomonas palustris (strain BisB18) protein is Phosphoenolpyruvate carboxykinase (ATP).